Here is a 388-residue protein sequence, read N- to C-terminus: Probable nitrate transporter NarT (388 aa).

Transmembrane regions (helical) follow at residues 14 to 34 (TLSL…MPMI), 45 to 65 (ISIV…PFGY), 69 to 89 (IIGA…PIFL), 98 to 118 (MLML…VGVT), 139 to 159 (GNLG…AIGW), 161 to 181 (STVR…FFLG), 206 to 226 (YYLS…GIFL), 242 to 262 (GIRA…GGII), 276 to 296 (FLFM…ILFT), 297 to 317 (VGCL…FKLV), 330 to 350 (GIVS…ITYV), and 359 to 379 (LAFI…WHLS).

It belongs to the major facilitator superfamily. Nitrate/nitrite porter (TC 2.A.1.8) family.

The protein localises to the cell membrane. In terms of biological role, probably required for nitrate uptake under anoxic conditions. Also possibly involved in excretion of nitrite produced by the dissimilatory reduction of nitrate. The sequence is that of Probable nitrate transporter NarT (narT) from Staphylococcus carnosus (strain TM300).